A 273-amino-acid polypeptide reads, in one-letter code: Bis(5'-nucleosyl)-tetraphosphatase, symmetrical (273 aa).

The protein belongs to the Ap4A hydrolase family.

It catalyses the reaction P(1),P(4)-bis(5'-adenosyl) tetraphosphate + H2O = 2 ADP + 2 H(+). Hydrolyzes diadenosine 5',5'''-P1,P4-tetraphosphate to yield ADP. The protein is Bis(5'-nucleosyl)-tetraphosphatase, symmetrical (apaH) of Buchnera aphidicola subsp. Schizaphis graminum (strain Sg).